The sequence spans 390 residues: MDSIMEPYVADLLADDITASMVELLSGDGGAAQMDVGVLDAYLRAIGALPAHPAAPGADLAAAAEVESMASNDDTNGNWDTKVDAKVPSAFLPPPPGFPPLPVPALADEPVYAAPVDEGDAIRAFMQQLEWSEQYNGDDDAPAPDDSMASRPQLCAPYDDDIDANLRAMEKDAAERPSPDYLDTVHNGQISAASRASLVAWMGRLTHRYELAAGTLHRAVSYFDRFLSARALPSYTEHQLSLVGATAVYTAAKYEDQGTVFKLDAREIASYGEFASAQEVLAMEREMMAALGYRLGGPNAETFVEHFTRYSKGKEELRVQRLARHIADRSLESYGCLGYLPSVVAAAVISIARWTLNPPGALPWSSELHELTGYSSQDISSCVLTVLNTQ.

The tract at residues 135–154 is disordered; that stretch reads YNGDDDAPAPDDSMASRPQL.

It belongs to the cyclin family. Cyclin F subfamily.

The polypeptide is Putative cyclin-F2-1 (CycF2-1) (Oryza sativa subsp. japonica (Rice)).